Consider the following 629-residue polypeptide: tRNA uridine 5-carboxymethylaminomethyl modification enzyme MnmG (629 aa).

Residues 14 to 19, Val-126, and Ser-181 each bind FAD; that span reads GAGHAG. Residue 273-287 participates in NAD(+) binding; that stretch reads GPRYCPSIEDKVVRF. FAD is bound at residue Gln-370.

The protein belongs to the MnmG family. In terms of assembly, homodimer. Heterotetramer of two MnmE and two MnmG subunits. FAD is required as a cofactor.

It is found in the cytoplasm. NAD-binding protein involved in the addition of a carboxymethylaminomethyl (cmnm) group at the wobble position (U34) of certain tRNAs, forming tRNA-cmnm(5)s(2)U34. This Bacillus mycoides (strain KBAB4) (Bacillus weihenstephanensis) protein is tRNA uridine 5-carboxymethylaminomethyl modification enzyme MnmG.